The sequence spans 418 residues: Gene 68 protein (418 aa).

2 disordered regions span residues 230–304 (IPAP…IHTL) and 353–418 (DTFE…ERRA). The span at 241-250 (RPSEGGDARP) shows a compositional bias: basic and acidic residues. Positions 257 to 266 (SRARSVHGRR) are enriched in basic residues. The span at 353–369 (DTFEDNRRDELRHDDSR) shows a compositional bias: basic and acidic residues. Over residues 395–404 (PHLRRSRGRG) the composition is skewed to basic residues.

It belongs to the herpesviridae US2 family.

The chain is Gene 68 protein from Equine herpesvirus 1 (strain Ab4p) (EHV-1).